Here is a 690-residue protein sequence, read N- to C-terminus: Elongation factor G (690 aa).

The tr-type G domain maps to 8-283 (EDYRNFGIMA…AVVAYLPSPL (276 aa)). Residues 17–24 (AHIDAGKT), 81–85 (DTPGH), and 135–138 (NKMD) each bind GTP.

This sequence belongs to the TRAFAC class translation factor GTPase superfamily. Classic translation factor GTPase family. EF-G/EF-2 subfamily.

It localises to the cytoplasm. Catalyzes the GTP-dependent ribosomal translocation step during translation elongation. During this step, the ribosome changes from the pre-translocational (PRE) to the post-translocational (POST) state as the newly formed A-site-bound peptidyl-tRNA and P-site-bound deacylated tRNA move to the P and E sites, respectively. Catalyzes the coordinated movement of the two tRNA molecules, the mRNA and conformational changes in the ribosome. In Nitrobacter winogradskyi (strain ATCC 25391 / DSM 10237 / CIP 104748 / NCIMB 11846 / Nb-255), this protein is Elongation factor G.